The following is a 405-amino-acid chain: Probable dual specificity protein kinase YAK1 homolog (405 aa).

A Protein kinase domain is found at 40-335 (YMIIDMLGTG…AKSLASHSYL (296 aa)). ATP contacts are provided by residues 46–54 (LGTGTFGQV) and lysine 68. Catalysis depends on aspartate 163, which acts as the Proton acceptor.

The protein belongs to the protein kinase superfamily. CMGC Ser/Thr protein kinase family. MNB/DYRK subfamily.

The protein resides in the cytoplasm. It localises to the nucleus. The catalysed reaction is L-seryl-[protein] + ATP = O-phospho-L-seryl-[protein] + ADP + H(+). It carries out the reaction L-threonyl-[protein] + ATP = O-phospho-L-threonyl-[protein] + ADP + H(+). It catalyses the reaction L-tyrosyl-[protein] + ATP = O-phospho-L-tyrosyl-[protein] + ADP + H(+). Functionally, negative regulator of the cell cycle acting downstream of the cAMP-dependent protein kinase. Part of a glucose-sensing system involved in growth control in response to glucose availability. The protein is Probable dual specificity protein kinase YAK1 homolog (YAK1) of Encephalitozoon cuniculi (strain GB-M1) (Microsporidian parasite).